The primary structure comprises 318 residues: MDMRTTEQQYNPYRVFTRQQWAELRNDTPMTLEPGEFSKLRSMHDRLDLKEVEDIYLPLSRLLSMYVDAAQRLYYAQRQFLGIRDRKMPYIIGVAGSVSVGKSTTARVLQALLARWSPRPKVDLITTDGFLYPNAVLERQGLMQKKGFPESYDLPRLLAFLSDIKAGRHTVRAPVYSHLTYDIVPNQWVEIDQPDILIVEGVNVLQTGPLPRDGKAVPVVSDFFDFSVYIDADEAVLRKWYVKRFLSLRDTAFHDPRSYFNRYALLSDEEAIATAIAIWERTNLANLEDNILPTRPRATLILKKGADHEVETVALRRL.

G96–S103 contributes to the ATP binding site.

It belongs to the prokaryotic pantothenate kinase family.

It localises to the cytoplasm. The enzyme catalyses (R)-pantothenate + ATP = (R)-4'-phosphopantothenate + ADP + H(+). It functions in the pathway cofactor biosynthesis; coenzyme A biosynthesis; CoA from (R)-pantothenate: step 1/5. In Bradyrhizobium sp. (strain BTAi1 / ATCC BAA-1182), this protein is Pantothenate kinase.